We begin with the raw amino-acid sequence, 2485 residues long: Probable polyketide synthase 10 (2485 aa).

The Ketosynthase family 3 (KS3) domain maps to Glu8–Glu447. Catalysis depends on for beta-ketoacyl synthase activity residues Cys184, His325, and His363. The acyl/malonyl transferase stretch occupies residues Gly636 to Tyr669. The active-site For acyl/malonyl transferase activity is Ser646. The N-terminal hotdog fold stretch occupies residues Pro930 to Phe1054. One can recognise a PKS/mFAS DH domain in the interval Pro930 to Pro1220. His964 (proton acceptor; for dehydratase activity) is an active-site residue. The tract at residues Asn1071–Pro1220 is C-terminal hotdog fold. Residue Asp1134 is the Proton donor; for dehydratase activity of the active site. One can recognise a Carrier domain in the interval Glu2410–Lys2485. Ser2447 is modified (O-(pantetheine 4'-phosphoryl)serine).

Requires pantetheine 4'-phosphate as cofactor.

Functionally, probable polyketide synthase. This Dictyostelium discoideum (Social amoeba) protein is Probable polyketide synthase 10 (pks10).